The following is a 384-amino-acid chain: Probable intron-encoded endonuclease Cox1-I1b (384 aa).

The protein belongs to the LAGLIDADG endonuclease family.

Its subcellular location is the mitochondrion. In terms of biological role, probable mitochondrial DNA endonuclease involved in intron homing. The sequence is that of Probable intron-encoded endonuclease Cox1-I1b (cox1-I1b) from Schizosaccharomyces pombe (strain 972 / ATCC 24843) (Fission yeast).